A 394-amino-acid polypeptide reads, in one-letter code: ATP phosphoribosyltransferase regulatory subunit (394 aa).

The protein belongs to the class-II aminoacyl-tRNA synthetase family. HisZ subfamily. In terms of assembly, heteromultimer composed of HisG and HisZ subunits.

Its subcellular location is the cytoplasm. It participates in amino-acid biosynthesis; L-histidine biosynthesis; L-histidine from 5-phospho-alpha-D-ribose 1-diphosphate: step 1/9. Required for the first step of histidine biosynthesis. May allow the feedback regulation of ATP phosphoribosyltransferase activity by histidine. The chain is ATP phosphoribosyltransferase regulatory subunit from Geobacillus thermodenitrificans (strain NG80-2).